The primary structure comprises 357 residues: GPI mannosyltransferase 2 (357 aa).

Helical transmembrane passes span 6–26 (TLIV…LVVP), 86–106 (AIAY…ALML), 128–148 (ILSP…FALL), 167–187 (VLGA…PFLF), 201–221 (GVSV…TQYL), 257–277 (YWTA…YLMY), 286–306 (LVPF…MWHV), and 334–354 (YVVR…GAYL).

It belongs to the PIGV family.

It is found in the endoplasmic reticulum membrane. Its pathway is glycolipid biosynthesis; glycosylphosphatidylinositol-anchor biosynthesis. Functionally, mannosyltransferase involved in glycosylphosphatidylinositol-anchor biosynthesis. Transfers the second mannose to the glycosylphosphatidylinositol during GPI precursor assembly. The polypeptide is GPI mannosyltransferase 2 (GPI18) (Yarrowia lipolytica (strain CLIB 122 / E 150) (Yeast)).